Reading from the N-terminus, the 219-residue chain is Hemolysin-3 (219 aa).

7 helical membrane passes run 19–39 (AITH…LIIH), 49–69 (VVAF…STLL), 83–103 (ILDH…FLLI), 112–132 (TLLA…IFFV), 138–158 (ASTL…KPLY), 165–185 (GFSL…FFLW), and 194–214 (IWHL…LFYV).

It belongs to the UPF0073 (Hly-III) family.

Its subcellular location is the cell membrane. Might be virulent against a mammalian host; when expressed in E.coli, the soluble extract has hemolytic activity on human erythrocytes. The activity is not inhibited by cholesterol or activated by 2-mercaptoethanol. Might be pore-forming protein. Its in vivo role in virulence is untested, nor has it been shown to be secreted by B.cereus. This chain is Hemolysin-3, found in Bacillus cereus.